A 917-amino-acid polypeptide reads, in one-letter code: Autophagy-related protein 9 (917 aa).

The Cytoplasmic segment spans residues 1–226; sequence MASNIFSRLV…AGFWCIIVQR (226 aa). Disordered stretches follow at residues 16–37 and 119–177; these read RSFY…RAGI and LLLS…QGRP. Residues 227 to 247 traverse the membrane as a helical segment; the sequence is ILELVNAAFVAVFLTFLSQCV. At 248–275 the chain is on the lumenal side; sequence DYHKLPHSKKMEDIIIPKCTQNMSLVWN. N-linked (GlcNAc...) asparagine glycosylation occurs at Asn-269. Residues 276-296 form a helical membrane-spanning segment; the sequence is VGLWLFAIYFICRCFGLIIQL. The Cytoplasmic segment spans residues 297–442; sequence RQLKHLRDFY…RQLSQKLKSR (146 aa). An intramembrane segment occupies 443–463; the sequence is FFFAGLMIFVMSPFIALYLIL. Topologically, residues 464-539 are cytoplasmic; the sequence is VYFLTYFHEF…ARTVSFITGS (76 aa). The chain crosses the membrane as a helical span at residues 540–560; that stretch reads IVAVLGLATIFDSEAFLTFEI. The Lumenal segment spans residues 561–564; the sequence is TPDR. A helical membrane pass occupies residues 565-585; it reads SVLFYVSILATLWAVARGNIS. Residues 586 to 633 lie on the Cytoplasmic side of the membrane; it reads DDNEVYDPEFAMKSIIEFTHYEPDHWRGRLHSTEVKNEFSELYKPRPQ. N6-acetyllysine is present on Lys-621. The stretch at 634–654 is an intramembrane region; that stretch reads IFLEEILSILLTPLVLLVSLP. Residues 655–917 lie on the Cytoplasmic side of the membrane; the sequence is NSTDQIVDFF…FQQAHMHLRR (263 aa). The tract at residues 854–895 is disordered; it reads DARFGKLGDEDIDESGGALDESTWQTSPTKTLSRENSGANPQ. The segment covering 875-895 has biased composition (polar residues); that stretch reads STWQTSPTKTLSRENSGANPQ.

This sequence belongs to the ATG9 family. In terms of assembly, homotrimer; forms a homotrimer with a central pore that forms a path between the two membrane leaflets. Interacts with HAT1. Acetylated by HAT1 at Lys-621, which increases the ability to bind vesicles during nutrient starvation induction. Post-translationally, phosphorylated by ATG1. ATG1 phosphorylation is required for preautophagosome elongation.

Its subcellular location is the preautophagosomal structure membrane. It localises to the cytoplasmic vesicle membrane. It is found in the vacuole membrane. The protein localises to the golgi apparatus membrane. The protein resides in the endoplasmic reticulum membrane. It catalyses the reaction a 1,2-diacyl-sn-glycero-3-phosphocholine(in) = a 1,2-diacyl-sn-glycero-3-phosphocholine(out). The enzyme catalyses a 1,2-diacyl-sn-glycero-3-phospho-L-serine(in) = a 1,2-diacyl-sn-glycero-3-phospho-L-serine(out). The catalysed reaction is a 1,2-diacyl-sn-glycero-3-phosphoethanolamine(in) = a 1,2-diacyl-sn-glycero-3-phosphoethanolamine(out). It carries out the reaction a 1,2-diacyl-sn-glycero-3-phospho-(1D-myo-inositol-3-phosphate)(in) = a 1,2-diacyl-sn-glycero-3-phospho-(1D-myo-inositol-3-phosphate)(out). Phospholipid scramblase involved in autophagy and cytoplasm to vacuole transport (Cvt) vesicle formation. Cycles between the preautophagosomal structure/phagophore assembly site (PAS) and the cytoplasmic vesicle pool and supplies membrane for the growing autophagosome. Lipid scramblase activity plays a key role in preautophagosomal structure/phagophore assembly by distributing the phospholipids that arrive through ATG2 from the cytoplasmic to the luminal leaflet of the bilayer, thereby driving autophagosomal membrane expansion. Required for mitophagy. Also involved in endoplasmic reticulum-specific autophagic process and is essential for the survival of cells subjected to severe ER stress. Different machineries are required for anterograde trafficking to the PAS during either the Cvt pathway or bulk autophagy and for retrograde trafficking. Plays a role in appressorium formation and pathogenicity. The protein is Autophagy-related protein 9 of Pyricularia oryzae (strain 70-15 / ATCC MYA-4617 / FGSC 8958) (Rice blast fungus).